Here is a 222-residue protein sequence, read N- to C-terminus: Charged multivesicular body protein 4a (222 aa).

Disordered stretches follow at residues 1-21 and 177-222; these read MSGLGRLFGRGKKEKGPTPEE and LLHV…EWVS. Positions 1–116 are interaction with phosphoinosides; it reads MSGLGRLFGR…ELAAQGLKKA (116 aa). The tract at residues 1–150 is intramolecular interaction with C-terminus; it reads MSGLGRLFGR…QISDAISRPV (150 aa). 2 coiled-coil regions span residues 20-105 and 155-180; these read EEAI…VLRT and DVDEDELLEELEELEQEELARELLHV. The tract at residues 151–222 is intramolecular interaction with N-terminus; the sequence is GFGDDVDEDE…ELKQLAEWVS (72 aa). Serine 196 carries the phosphoserine modification.

It belongs to the SNF7 family. Probable core component of the endosomal sorting required for transport complex III (ESCRT-III). ESCRT-III components are thought to multimerize to form a flat lattice on the perimeter membrane of the endosome. Several assembly forms of ESCRT-III may exist that interact and act sequentially. Self-associates; overexpression leads to the assembly of filaments that curve and associate to create circular rings. Interacts with CHMP2A. Interacts with CHMP3; the interaction requires the release of CHMP4A autoinhibition. Interacts with CHMP4B. Interacts with CHMP4C. Interacts with CHMP6. Interacts with VPS4A. Interacts with PDCD6IP; the interaction is direct.

It localises to the cytoplasmic vesicle membrane. Its subcellular location is the late endosome membrane. In terms of biological role, probable core component of the endosomal sorting required for transport complex III (ESCRT-III) which is involved in multivesicular bodies (MVBs) formation and sorting of endosomal cargo proteins into MVBs. MVBs contain intraluminal vesicles (ILVs) that are generated by invagination and scission from the limiting membrane of the endosome and mostly are delivered to lysosomes enabling degradation of membrane proteins, such as stimulated growth factor receptors, lysosomal enzymes and lipids. The MVB pathway appears to require the sequential function of ESCRT-O, -I,-II and -III complexes. ESCRT-III proteins mostly dissociate from the invaginating membrane before the ILV is released. The ESCRT machinery also functions in topologically equivalent membrane fission events, such as the terminal stages of cytokinesis and the budding of enveloped viruses (lentiviruses). ESCRT-III proteins are believed to mediate the necessary vesicle extrusion and/or membrane fission activities, possibly in conjunction with the AAA ATPase VPS4. When overexpressed, membrane-assembled circular arrays of CHMP4A filaments can promote or stabilize negative curvature and outward budding. CHMP4A/B/C are required for the exosomal release of SDCBP, CD63 and syndecan. In Bos taurus (Bovine), this protein is Charged multivesicular body protein 4a (CHMP4A).